Consider the following 273-residue polypeptide: Tyrosinase (273 aa).

A signal peptide spans 1–18 (MCLLALGFLLGILQPASG). 2 N-linked (GlcNAc...) asparagine glycosylation sites follow: Asn-86 and Asn-169. The Cu cation site is built by His-180, His-202, and His-211. An N-linked (GlcNAc...) asparagine glycan is attached at Asn-230.

Belongs to the tyrosinase family. Cu(2+) serves as cofactor.

The protein resides in the melanosome membrane. It carries out the reaction 2 L-dopa + O2 = 2 L-dopaquinone + 2 H2O. The enzyme catalyses L-tyrosine + O2 = L-dopaquinone + H2O. Functionally, this is a copper-containing oxidase that functions in the formation of pigments such as melanins and other polyphenolic compounds. The chain is Tyrosinase (TYR) from Pelodiscus sinensis (Chinese softshell turtle).